A 325-amino-acid polypeptide reads, in one-letter code: Protein VP6-B (325 aa).

Disordered regions lie at residues 23 to 123 (INLI…TIGA) and 176 to 229 (VAEQ…EEQA). Composition is skewed to basic and acidic residues over residues 32 to 52 (ESGKEDKAEPKEESKAEESKD) and 61 to 79 (SQKKEGSKEAKDADVDRRI). The segment covering 106–123 (KVGGGGGNADAGVGTIGA) has biased composition (gly residues). Basic and acidic residues-rich tracts occupy residues 176–201 (VAEQTERLRDLRRKEKSGAHAKAAER) and 210–226 (PHGDVQKEGTEEEKTSE).

Belongs to the orbivirus VP6 family.

The protein localises to the virion. In terms of biological role, surrounds and interacts with the genomic dsRNA. Possesses ss- and dsRNA-binding capacity. Its hydrophilic nature and capability to bind ss- and dsRNA suggest that it interacts with BTV genomic RNA. This chain is Protein VP6-B (Segment-9), found in Bluetongue virus 10 (isolate USA) (BTV 10).